The following is a 207-amino-acid chain: Outer-membrane lipoprotein LolB (207 aa).

A signal peptide spans 1 to 21 (MPQPDFRLIRLLPLAALVLTA). Cys22 carries the N-palmitoyl cysteine lipid modification. A lipid anchor (S-diacylglycerol cysteine) is attached at Cys22.

The protein belongs to the LolB family. As to quaternary structure, monomer.

Its subcellular location is the cell outer membrane. Plays a critical role in the incorporation of lipoproteins in the outer membrane after they are released by the LolA protein. The chain is Outer-membrane lipoprotein LolB from Shigella sonnei (strain Ss046).